Consider the following 419-residue polypeptide: RNA polymerase sigma factor sigD, chloroplastic (419 aa).

The N-terminal 52 residues, Met-1–Cys-52, are a transit peptide targeting the chloroplast. Positions Asp-207–Ala-220 match the Polymerase core binding motif. Positions Phe-377–Gly-396 form a DNA-binding region, H-T-H motif.

Belongs to the sigma-70 factor family. In terms of tissue distribution, mostly expressed in leaves, and to a lesser extent in roots. Present in seedlings.

Its subcellular location is the plastid. It localises to the chloroplast. Functionally, sigma factors are initiation factors that promote the attachment of plastid-encoded RNA polymerase (PEP) to specific initiation sites and are then released. Regulates transcription of the ndhF gene which codes for a subunit of the plastid NDH [NAD(P)H dehydrogenase] complex. This is RNA polymerase sigma factor sigD, chloroplastic (SIGD) from Arabidopsis thaliana (Mouse-ear cress).